The following is a 394-amino-acid chain: 1-acylglycerol-3-phosphate O-acyltransferase ICT1 (394 aa).

One can recognise an AB hydrolase-1 domain in the interval 74–381 (VLIHGYAASS…AGHNLFLDNP (308 aa)). The short motif at 374–379 (HNLFLD) is the HXXXXD motif element.

It belongs to the peptidase S33 family. ABHD4/ABHD5 subfamily.

It carries out the reaction a 1-acyl-sn-glycero-3-phosphate + an acyl-CoA = a 1,2-diacyl-sn-glycero-3-phosphate + CoA. Lysophosphatidic acid acyltransferase involved in membrane remodeling leading to increased organic solvent tolerance. Involved in resistance to azoles and copper. This is 1-acylglycerol-3-phosphate O-acyltransferase ICT1 (ICT1) from Saccharomyces cerevisiae (strain ATCC 204508 / S288c) (Baker's yeast).